Consider the following 352-residue polypeptide: Molybdenum import ATP-binding protein ModC (352 aa).

The region spanning 1 to 229 is the ABC transporter domain; it reads MLELNFSQTL…SVMNPWLPKE (229 aa). 31-38 contributes to the ATP binding site; that stretch reads GVSGAGKT. The region spanning 289–352 is the Mop domain; the sequence is QTSIRNVLRA…AQIKSVSITA (64 aa).

The protein belongs to the ABC transporter superfamily. Molybdate importer (TC 3.A.1.8) family. The complex is composed of two ATP-binding proteins (ModC), two transmembrane proteins (ModB) and a solute-binding protein (ModA).

The protein resides in the cell inner membrane. It catalyses the reaction molybdate(out) + ATP + H2O = molybdate(in) + ADP + phosphate + H(+). Part of the ABC transporter complex ModABC involved in molybdenum import. Responsible for energy coupling to the transport system. The sequence is that of Molybdenum import ATP-binding protein ModC from Escherichia coli (strain K12).